Here is a 335-residue protein sequence, read N- to C-terminus: tRNA N6-adenosine threonylcarbamoyltransferase (335 aa).

Residues His110 and His114 each contribute to the Fe cation site. Substrate contacts are provided by residues 132 to 136, Asp165, Gly178, and Asn271; that span reads LVSGG. Residue Asp299 participates in Fe cation binding.

Belongs to the KAE1 / TsaD family. Fe(2+) is required as a cofactor.

The protein localises to the cytoplasm. The catalysed reaction is L-threonylcarbamoyladenylate + adenosine(37) in tRNA = N(6)-L-threonylcarbamoyladenosine(37) in tRNA + AMP + H(+). Functionally, required for the formation of a threonylcarbamoyl group on adenosine at position 37 (t(6)A37) in tRNAs that read codons beginning with adenine. Is involved in the transfer of the threonylcarbamoyl moiety of threonylcarbamoyl-AMP (TC-AMP) to the N6 group of A37, together with TsaE and TsaB. TsaD likely plays a direct catalytic role in this reaction. The polypeptide is tRNA N6-adenosine threonylcarbamoyltransferase (Campylobacter jejuni subsp. jejuni serotype O:2 (strain ATCC 700819 / NCTC 11168)).